We begin with the raw amino-acid sequence, 268 residues long: NH(3)-dependent NAD(+) synthetase (268 aa).

46 to 53 (GISGGQDS) is a binding site for ATP. Asp52 serves as a coordination point for Mg(2+). A deamido-NAD(+)-binding site is contributed by Arg140. Thr160 serves as a coordination point for ATP. Glu165 serves as a coordination point for Mg(2+). 2 residues coordinate deamido-NAD(+): Lys173 and Asp180. ATP-binding residues include Lys189 and Thr211. 260 to 261 (HK) lines the deamido-NAD(+) pocket.

The protein belongs to the NAD synthetase family. In terms of assembly, homodimer.

It carries out the reaction deamido-NAD(+) + NH4(+) + ATP = AMP + diphosphate + NAD(+) + H(+). Its pathway is cofactor biosynthesis; NAD(+) biosynthesis; NAD(+) from deamido-NAD(+) (ammonia route): step 1/1. In terms of biological role, catalyzes the ATP-dependent amidation of deamido-NAD to form NAD. Uses ammonia as a nitrogen source. This is NH(3)-dependent NAD(+) synthetase from Buchnera aphidicola subsp. Schizaphis graminum (strain Sg).